The primary structure comprises 258 residues: Deoxyribose-phosphate aldolase (258 aa).

Catalysis depends on D101, which acts as the Proton donor/acceptor. K166 serves as the catalytic Schiff-base intermediate with acetaldehyde. The active-site Proton donor/acceptor is K200.

The protein belongs to the DeoC/FbaB aldolase family. DeoC type 2 subfamily.

It is found in the cytoplasm. It carries out the reaction 2-deoxy-D-ribose 5-phosphate = D-glyceraldehyde 3-phosphate + acetaldehyde. Its pathway is carbohydrate degradation; 2-deoxy-D-ribose 1-phosphate degradation; D-glyceraldehyde 3-phosphate and acetaldehyde from 2-deoxy-alpha-D-ribose 1-phosphate: step 2/2. Functionally, catalyzes a reversible aldol reaction between acetaldehyde and D-glyceraldehyde 3-phosphate to generate 2-deoxy-D-ribose 5-phosphate. This Haemophilus ducreyi (strain 35000HP / ATCC 700724) protein is Deoxyribose-phosphate aldolase.